Here is a 341-residue protein sequence, read N- to C-terminus: MATIKDVAKHAGVSTTTVSHVINKTRFVAEDTKAAVWAAIKALNYSPSAVARSLKVNHTKSIGLLATSSEAPYFAEIIESVENSCYSKGYTLILCNSHNNIDKQKAYLAMLAQKRVDGLLIMCSEYPEQLLGMLEDYRNIPMVVMDWGQARSDFTDTIIDNAFHGGYLAGRYLIERGHRDIGAIPGPLARNTGGGRHQGFLKALKEANIPIKEEWVIQGDFEPESGYKAMHQILNQKQRPTAVFCGGDVMAMGAICAADELGLRVPQDISVIGYDNIRNARYFSPALTTIHQPKERLGQMAFSMLLDRIINKREDAQTIEVHPRLVERRSVVDGPFVDYRR.

The region spanning 2–56 (ATIKDVAKHAGVSTTTVSHVINKTRFVAEDTKAAVWAAIKALNYSPSAVARSLKV) is the HTH lacI-type domain. Residues 4–23 (IKDVAKHAGVSTTTVSHVIN) constitute a DNA-binding region (H-T-H motif). The DNA-binding element occupies 48 to 56 (SAVARSLKV). 5 residues coordinate hypoxanthine: Y73, R190, T192, F221, and D275.

In terms of assembly, homodimer.

It functions in the pathway purine metabolism; purine nucleotide biosynthesis [regulation]. Is the main repressor of the genes involved in the de novo synthesis of purine nucleotides, regulating purB, purC, purEK, purF, purHD, purL, purMN and guaBA expression. PurR is allosterically activated to bind its cognate DNA by binding the purine corepressors, hypoxanthine or guanine, thereby effecting transcription repression. The chain is HTH-type transcriptional repressor PurR from Photorhabdus laumondii subsp. laumondii (strain DSM 15139 / CIP 105565 / TT01) (Photorhabdus luminescens subsp. laumondii).